Here is a 293-residue protein sequence, read N- to C-terminus: MPAKILDGKALAARLQAEMAAQVQAWIPQVGRPPGLAVLRVGEDPASAAYVRGKERACERLGIASFGRHFSAQDSPAHLLDTIDQLNQDERVDGILVQLPLPPGWDPIPPLLAINPDKDVDGLHPLNLGRLLRGEPGLRSCTPLGVMRLLQAEGIPIAGRKAVVVGRSILVGKPLSLMLLAADATVTLAHSRTPDLAEVTRAADIVVMAVGRPRLLRADMVKPGAVVIDVGINRIETPTGAEQLVGDVDYEAVKELAAAITPVPGGVGPMTVTMLLANTLQSYKLRSHLCSHY.

NADP(+) contacts are provided by residues 166-168 (GRS), serine 191, and isoleucine 232.

The protein belongs to the tetrahydrofolate dehydrogenase/cyclohydrolase family. Homodimer.

The enzyme catalyses (6R)-5,10-methylene-5,6,7,8-tetrahydrofolate + NADP(+) = (6R)-5,10-methenyltetrahydrofolate + NADPH. The catalysed reaction is (6R)-5,10-methenyltetrahydrofolate + H2O = (6R)-10-formyltetrahydrofolate + H(+). It functions in the pathway one-carbon metabolism; tetrahydrofolate interconversion. Catalyzes the oxidation of 5,10-methylenetetrahydrofolate to 5,10-methenyltetrahydrofolate and then the hydrolysis of 5,10-methenyltetrahydrofolate to 10-formyltetrahydrofolate. This Synechococcus sp. (strain JA-2-3B'a(2-13)) (Cyanobacteria bacterium Yellowstone B-Prime) protein is Bifunctional protein FolD.